Here is a 329-residue protein sequence, read N- to C-terminus: 4-hydroxythreonine-4-phosphate dehydrogenase (329 aa).

Substrate is bound by residues His136 and Thr137. Positions 166, 211, and 266 each coordinate a divalent metal cation. 3 residues coordinate substrate: Lys274, Asn283, and Arg292.

This sequence belongs to the PdxA family. In terms of assembly, homodimer. Requires Zn(2+) as cofactor. Mg(2+) serves as cofactor. Co(2+) is required as a cofactor.

Its subcellular location is the cytoplasm. It carries out the reaction 4-(phosphooxy)-L-threonine + NAD(+) = 3-amino-2-oxopropyl phosphate + CO2 + NADH. It participates in cofactor biosynthesis; pyridoxine 5'-phosphate biosynthesis; pyridoxine 5'-phosphate from D-erythrose 4-phosphate: step 4/5. Its function is as follows. Catalyzes the NAD(P)-dependent oxidation of 4-(phosphooxy)-L-threonine (HTP) into 2-amino-3-oxo-4-(phosphooxy)butyric acid which spontaneously decarboxylates to form 3-amino-2-oxopropyl phosphate (AHAP). The chain is 4-hydroxythreonine-4-phosphate dehydrogenase from Salmonella arizonae (strain ATCC BAA-731 / CDC346-86 / RSK2980).